The sequence spans 158 residues: UPF0735 ACT domain-containing protein Bsph_3944 (158 aa).

An ACT domain is found at 80-155; sequence TVFLQLQDRK…FVESAEVISS (76 aa).

The protein belongs to the UPF0735 family.

The chain is UPF0735 ACT domain-containing protein Bsph_3944 from Lysinibacillus sphaericus (strain C3-41).